The sequence spans 651 residues: Zinc metalloproteinase nas-32 (651 aa).

A signal peptide spans 1–21 (MRRFFICYIGFLSIFLDFILA). Residues 22–202 (DKDNNSEEER…EQSSKSRRKK (181 aa)) constitute a propeptide that is removed on maturation. Residues Asn-25, Asn-72, and Asn-251 are each glycosylated (N-linked (GlcNAc...) asparagine). The region spanning 203–394 (RQIDNLAQFW…KMLNTHYSCS (192 aa)) is the Peptidase M12A domain. 6 disulfide bridges follow: Cys-245–Cys-393, Cys-264–Cys-283, Cys-395–Cys-412, Cys-415–Cys-426, Cys-434–Cys-467, and Cys-495–Cys-516. His-291 is a Zn(2+) binding site. Residue Glu-292 is part of the active site. Zn(2+)-binding residues include His-295 and His-301. One can recognise an EGF-like domain in the interval 380–433 (TFLDLKMLNTHYSCSCPTILSCGNGGFTNPANCSVCICPYGFGGALCTERTDYG). N-linked (GlcNAc...) asparagine glycosylation is present at Asn-411. The CUB domain occupies 434–554 (CGSTLTATDT…TTYTWSYRYV (121 aa)). The N-linked (GlcNAc...) asparagine glycan is linked to Asn-453. The N-linked (GlcNAc...) asparagine glycan is linked to Asn-557. Disulfide bonds link Cys-610–Cys-647, Cys-619–Cys-640, and Cys-628–Cys-644. The ShKT domain maps to 610-647 (CKDRFPKSQCSTYSTNGMCTQQPPLAAEFSCAETCGFC).

The cofactor is Zn(2+). In terms of tissue distribution, expressed in pharyngeal, anal depressor, intestinal and vulva muscles, head neurons and head mesodermal cell.

Its subcellular location is the secreted. Functionally, metalloprotease. This chain is Zinc metalloproteinase nas-32 (nas-32), found in Caenorhabditis elegans.